The chain runs to 353 residues: Photosystem II protein D1 (353 aa).

N-acetylthreonine is present on threonine 2. Threonine 2 bears the Phosphothreonine mark. 3 helical membrane passes run 29–46, 118–133, and 142–156; these read YIGW…TATS, HFLL…EWEL, and WIAV…AATA. Histidine 118 contributes to the chlorophyll a binding site. Pheophytin a is bound at residue tyrosine 126. [CaMn4O5] cluster contacts are provided by aspartate 170 and glutamate 189. The helical transmembrane segment at 197-218 threads the bilayer; the sequence is FHMLGVAGVFGGSLFSAMHGSL. Histidine 198 contributes to the chlorophyll a binding site. A quinone is bound by residues histidine 215 and 264 to 265; that span reads SF. Histidine 215 is a Fe cation binding site. Histidine 272 is a Fe cation binding site. The helical transmembrane segment at 274-288 threads the bilayer; the sequence is FLAAWPVIGIWFTSL. Positions 332, 333, 342, and 344 each coordinate [CaMn4O5] cluster. The propeptide occupies 345–353; it reads AVEAPSTIG.

The protein belongs to the reaction center PufL/M/PsbA/D family. As to quaternary structure, PSII is composed of 1 copy each of membrane proteins PsbA, PsbB, PsbC, PsbD, PsbE, PsbF, PsbH, PsbI, PsbJ, PsbK, PsbL, PsbM, PsbT, PsbX, PsbY, PsbZ, Psb30/Ycf12, at least 3 peripheral proteins of the oxygen-evolving complex and a large number of cofactors. It forms dimeric complexes. The D1/D2 heterodimer binds P680, chlorophylls that are the primary electron donor of PSII, and subsequent electron acceptors. It shares a non-heme iron and each subunit binds pheophytin, quinone, additional chlorophylls, carotenoids and lipids. D1 provides most of the ligands for the Mn4-Ca-O5 cluster of the oxygen-evolving complex (OEC). There is also a Cl(-1) ion associated with D1 and D2, which is required for oxygen evolution. The PSII complex binds additional chlorophylls, carotenoids and specific lipids. is required as a cofactor. Post-translationally, tyr-161 forms a radical intermediate that is referred to as redox-active TyrZ, YZ or Y-Z. In terms of processing, C-terminally processed by CTPA; processing is essential to allow assembly of the oxygen-evolving complex and thus photosynthetic growth.

The protein resides in the plastid. Its subcellular location is the chloroplast thylakoid membrane. The catalysed reaction is 2 a plastoquinone + 4 hnu + 2 H2O = 2 a plastoquinol + O2. Its function is as follows. Photosystem II (PSII) is a light-driven water:plastoquinone oxidoreductase that uses light energy to abstract electrons from H(2)O, generating O(2) and a proton gradient subsequently used for ATP formation. It consists of a core antenna complex that captures photons, and an electron transfer chain that converts photonic excitation into a charge separation. The D1/D2 (PsbA/PsbD) reaction center heterodimer binds P680, the primary electron donor of PSII as well as several subsequent electron acceptors. The protein is Photosystem II protein D1 of Landoltia punctata (Dotted duckmeat).